A 211-amino-acid chain; its full sequence is Beta-crystallin B3 (211 aa).

Position 1 is an N-acetylmethionine (Met-1). N-acetylalanine; in Beta-crystallin B3, N-terminally processed is present on Ala-2. Residues 2–23 (AEQHSTPEQAAAGKSHGGLGGS) are N-terminal arm. Beta/gamma crystallin 'Greek key' domains lie at 24 to 63 (YKVI…QVES) and 64 to 108 (GPWL…RPLH). The tract at residues 109–113 (IDGPD) is connecting peptide. Beta/gamma crystallin 'Greek key' domains follow at residues 114 to 155 (HKLH…RAIN) and 156 to 198 (GTWV…RRIR). Residues 200–211 (QKWHKRGVFLSS) are C-terminal arm.

Belongs to the beta/gamma-crystallin family. Homo/heterodimer, or complexes of higher-order. The structure of beta-crystallin oligomers seems to be stabilized through interactions between the N-terminal arms.

In terms of biological role, crystallins are the dominant structural components of the vertebrate eye lens. The sequence is that of Beta-crystallin B3 (CRYBB3) from Bos taurus (Bovine).